A 285-amino-acid polypeptide reads, in one-letter code: MRSARSTALNRGEQRAVRYYSHMKLNMAEEEDYMSDSFINVQEDIRPGLPMLRQIREARRKEEKQQEANLKNRQKSLKEEEQERRDIGLKNALGCENKGFALLQKMGYKSGQALGKSGGGIVEPIPLNIKTGKSGIGHEASLKRKAEEKLESYRKKIHMKNQAEEKAAEQFRMRLKNKQDEMKLEGDLRRSQRACQQLDVQKNIQVPREAWYWLRLEEETEEDEEEKEQDEDEYKSEDLSVLEKLQILTSYLREEHLYCIWCGTAYEDKEDLSSNCPGPTSADHD.

Residues 51-87 (MLRQIREARRKEEKQQEANLKNRQKSLKEEEQERRDI) are a coiled coil. The interval 59–84 (RRKEEKQQEANLKNRQKSLKEEEQER) is disordered. Positions 95 to 141 (CENKGFALLQKMGYKSGQALGKSGGGIVEPIPLNIKTGKSGIGHEAS) constitute a G-patch domain. Serine 141 carries the phosphoserine modification. Lysine 149 carries the N6-acetyllysine modification. Residues 218–235 (EETEEDEEEKEQDEDEYK) show a composition bias toward acidic residues. The segment at 218-237 (EETEEDEEEKEQDEDEYKSE) is disordered.

It belongs to the GPATCH11 family.

It localises to the chromosome. The protein resides in the centromere. Its subcellular location is the kinetochore. The chain is G patch domain-containing protein 11 (GPATCH11) from Homo sapiens (Human).